Consider the following 271-residue polypeptide: Dioscorin dioA3 (271 aa).

The N-terminal stretch at Met1–Ser21 is a signal peptide. Positions Asp28–Glu262 constitute an Alpha-carbonic anhydrase domain. A disulfide bond links Cys53 and Cys212. The Proton acceptor role is filled by His94. L-ascorbate contacts are provided by residues Asp95, His120 to His122, Gln139, and Thr208 to Ala209.

It belongs to the alpha-carbonic anhydrase family. Monomer. Homodimer. Not glycosylated. In terms of tissue distribution, expressed in tuber (at protein level).

The catalysed reaction is hydrogencarbonate + H(+) = CO2 + H2O. The enzyme catalyses 2 monodehydro-L-ascorbate radical + NADH + H(+) = 2 L-ascorbate + NAD(+). With respect to regulation, the carbonate dehydratase activity is not substantially changed by the addition of Zn(2+). Its function is as follows. Storage protein of tuber. Involved in protection against oxidative stress. Has carbonate dehydratase, trypsin inhibitor, dehydroascorbate (DHA) reductase and monodehydroascorbate (MDA) reductase activities. Catalyzes the reactions of carbonate dehydratase and DHA reductase independently of zinc and glutathione (GSH). The coupled reaction is capable of recycling a plant antioxidant ascorbate using ubiquitous compounds H(2)O and CO(2). Exhibits antioxidant activity. Able to scavenge 1,1-diphenyl-2-picrylhydrazyl (DPPH) radical. Exhibits immunomodulatory activity. Activates Toll-like receptor 4 signaling pathways by up-regulating the gene expression of pro-inflammatory cytokines, such as tumor necrosis factor alpha, interleukin-1 beta and interleukin-6, and chemokines RANTES and MCP-1, in mouse RAW 264.7 macrophages. Stimulates the phagocytosis of E.coli by the LPS-treated mouse macrophages. This is Dioscorin dioA3 from Dioscorea japonica (Japanese yam).